The primary structure comprises 192 residues: Ion-translocating oxidoreductase complex subunit B (192 aa).

Positions 1 to 26 (MNAIWIAVAAVSLLALAFGAILGYAS) are hydrophobic. Positions 32 to 91 (EDDPVVEKIDEILPQSQCGQCGYPGCRPYAEAISCNGEKINRCAPGGEAVMLKIAELLNV) constitute a 4Fe-4S domain. 12 residues coordinate [4Fe-4S] cluster: C49, C52, C57, C74, C117, C120, C123, C127, C147, C150, C153, and C157. 2 4Fe-4S ferredoxin-type domains span residues 108 to 137 (MVAVIDENNCIGCTKCIQACPVDAIVGATR) and 138 to 167 (AMHTVMSDLCTGCNLCVDPCPTHCISLQPV).

Belongs to the 4Fe4S bacterial-type ferredoxin family. RnfB subfamily. In terms of assembly, the complex is composed of six subunits: RsxA, RsxB, RsxC, RsxD, RsxE and RsxG. [4Fe-4S] cluster is required as a cofactor.

It is found in the cell inner membrane. Its function is as follows. Part of a membrane-bound complex that couples electron transfer with translocation of ions across the membrane. Required to maintain the reduced state of SoxR. The polypeptide is Ion-translocating oxidoreductase complex subunit B (Escherichia coli O81 (strain ED1a)).